We begin with the raw amino-acid sequence, 206 residues long: Guanylate kinase (206 aa).

Positions 5-184 constitute a Guanylate kinase-like domain; the sequence is GMLIVLSGPS…AAERIKAIIR (180 aa). 12–19 serves as a coordination point for ATP; it reads GPSGVGKG.

This sequence belongs to the guanylate kinase family.

The protein resides in the cytoplasm. The enzyme catalyses GMP + ATP = GDP + ADP. Functionally, essential for recycling GMP and indirectly, cGMP. This chain is Guanylate kinase, found in Lactiplantibacillus plantarum (strain ATCC BAA-793 / NCIMB 8826 / WCFS1) (Lactobacillus plantarum).